The chain runs to 933 residues: Phosphoenolpyruvate carboxylase (933 aa).

Catalysis depends on residues histidine 164 and lysine 595.

This sequence belongs to the PEPCase type 1 family. Mg(2+) serves as cofactor.

The catalysed reaction is oxaloacetate + phosphate = phosphoenolpyruvate + hydrogencarbonate. Forms oxaloacetate, a four-carbon dicarboxylic acid source for the tricarboxylic acid cycle. This is Phosphoenolpyruvate carboxylase from Rhodopseudomonas palustris (strain HaA2).